The primary structure comprises 143 residues: Nucleoside diphosphate kinase (143 aa).

Positions 11, 59, 87, 93, 104, and 114 each coordinate ATP. Residue H117 is the Pros-phosphohistidine intermediate of the active site.

Belongs to the NDK family. As to quaternary structure, homotetramer. It depends on Mg(2+) as a cofactor.

The protein resides in the cytoplasm. The catalysed reaction is dZDP + ATP = dZTP + ADP. The enzyme catalyses a 2'-deoxyribonucleoside 5'-diphosphate + ATP = a 2'-deoxyribonucleoside 5'-triphosphate + ADP. It catalyses the reaction a ribonucleoside 5'-diphosphate + ATP = a ribonucleoside 5'-triphosphate + ADP. It participates in purine metabolism. Functionally, major role in the synthesis of nucleoside triphosphates other than ATP. The ATP gamma phosphate is transferred to the NDP beta phosphate via a ping-pong mechanism, using a phosphorylated active-site intermediate. In terms of biological role, (Microbial infection) Catalyzes the phosphorylation of dZDP to dZTP, when the bacterium is infected by a phage that produces the substrate for the synthesis of dZTP (2- amino-2'-deoxyadenosine 5'-triphosphate), which is then used by the phage as a DNA polymerase substrate. This is Nucleoside diphosphate kinase from Acinetobacter baumannii (strain AB307-0294).